We begin with the raw amino-acid sequence, 367 residues long: tRNA (cytosine(34)-C(5))-methyltransferase, mitochondrial (367 aa).

Residues 170 to 176 (CAAPGGK), Glu193, Asp224, and Asp242 each bind S-adenosyl-L-methionine. The active-site Nucleophile is the Cys296.

The protein belongs to the class I-like SAM-binding methyltransferase superfamily. RsmB/NOP family.

The protein resides in the mitochondrion matrix. The catalysed reaction is cytidine(34) in mitochondrial tRNA + S-adenosyl-L-methionine = 5-methylcytidine(34) in mitochondrial tRNA + S-adenosyl-L-homocysteine + H(+). Mitochondrial tRNA methyltransferase that mediates methylation of cytosine to 5-methylcytosine (m5C) at position 34 of mt-tRNA(Met). mt-tRNA(Met) methylation at cytosine(34) takes place at the wobble position of the anticodon and initiates the formation of 5-formylcytosine (f(5)c) at this position. mt-tRNA(Met) containing the f(5)c modification at the wobble position enables recognition of the AUA codon in addition to the AUG codon, expanding codon recognition in mitochondrial translation. This chain is tRNA (cytosine(34)-C(5))-methyltransferase, mitochondrial, found in Danio rerio (Zebrafish).